A 75-amino-acid chain; its full sequence is Small ribosomal subunit protein bS18 (75 aa).

This sequence belongs to the bacterial ribosomal protein bS18 family. Part of the 30S ribosomal subunit. Forms a tight heterodimer with protein bS6.

Functionally, binds as a heterodimer with protein bS6 to the central domain of the 16S rRNA, where it helps stabilize the platform of the 30S subunit. The polypeptide is Small ribosomal subunit protein bS18 (Legionella pneumophila (strain Paris)).